The chain runs to 275 residues: Exosome complex component Rrp42 (275 aa).

The protein belongs to the RNase PH family. Rrp42 subfamily. As to quaternary structure, component of the archaeal exosome complex. Forms a hexameric ring-like arrangement composed of 3 Rrp41-Rrp42 heterodimers. The hexameric ring associates with a trimer of Rrp4 and/or Csl4 subunits.

It localises to the cytoplasm. Non-catalytic component of the exosome, which is a complex involved in RNA degradation. Contributes to the structuring of the Rrp41 active site. In Saccharolobus islandicus (strain M.16.27) (Sulfolobus islandicus), this protein is Exosome complex component Rrp42.